A 533-amino-acid chain; its full sequence is UDP-glucuronosyltransferase 1A1 (533 aa).

Residues 1-25 (MAVESQGGRPLVLGLLLCVLGPVVS) form the signal peptide. Asn102, Asn295, and Asn347 each carry an N-linked (GlcNAc...) asparagine glycan. Residues 491-507 (VIGFLLAVVLTVAFITF) form a helical membrane-spanning segment.

The protein belongs to the UDP-glycosyltransferase family. As to quaternary structure, homodimer. Homooligomer. Interacts with UGT1A3, UGT1A4, UGT1A6, UGT1A7, UGT1A8, UGT1A9 and UGT1A10 to form heterodimers. Isoform 1 interacts with isoform 2/i2 suggesting that oligomerization is involved in negative regulation of transferase activity by isoform 2. Isoform 1 also interacts with respective i2 isoforms of UGT1A3, UGT1A4, UGT1A6, UGT1A7, UGT1A8, UGT1A9 and UGT1A10. In terms of tissue distribution, expressed in liver, colon and small intestine. Not expressed in kidney, esophagus and skin. Expressed in liver, colon, small intestine and kidney. Not expressed in esophagus and skin.

It localises to the endoplasmic reticulum membrane. The protein resides in the cytoplasm. It is found in the perinuclear region. It carries out the reaction glucuronate acceptor + UDP-alpha-D-glucuronate = acceptor beta-D-glucuronoside + UDP + H(+). It catalyses the reaction 17beta-estradiol + UDP-alpha-D-glucuronate = 17beta-estradiol 3-O-(beta-D-glucuronate) + UDP + H(+). The enzyme catalyses 2-hydroxyestrone + UDP-alpha-D-glucuronate = 2-hydroxyestrone 3-O-(beta-D-glucuronate) + UDP + H(+). The catalysed reaction is 2-hydroxy-17beta-estradiol + UDP-alpha-D-glucuronate = 2-hydroxy-17beta-estradiol 3-O-(beta-D-glucuronate) + UDP + H(+). It carries out the reaction 2-methoxy-17beta-estradiol + UDP-alpha-D-glucuronate = 2-methoxy-17beta-estradiol 3-O-(beta-D-glucuronate) + UDP + H(+). It catalyses the reaction 17alpha-estradiol + UDP-alpha-D-glucuronate = 17alpha-estradiol 3-O-(beta-D-glucuronate) + UDP + H(+). The enzyme catalyses 16beta,17beta-estriol + UDP-alpha-D-glucuronate = 16beta,17beta-estriol 16-O-(beta-D-glucuronate) + UDP + H(+). The catalysed reaction is losartan + UDP-alpha-D-glucuronate = losartan-2-N-beta-D-glucuronide + UDP. It carries out the reaction prunetin + UDP-alpha-D-glucuronate = prunetin-4'-O-beta-D-glucuronide + UDP. It catalyses the reaction SN-38 + UDP-alpha-D-glucuronate = SN-38 O-beta-D-glucuronide + UDP + H(+). The enzyme catalyses (4Z,15Z)-bilirubin IXalpha + UDP-alpha-D-glucuronate = (4Z,15Z)-bilirubin IXalpha C12-beta-D-glucuronoside + UDP. The catalysed reaction is (4Z,15Z)-bilirubin IXalpha + UDP-alpha-D-glucuronate = (4Z,15Z)-bilirubin IXalpha C8-beta-D-glucuronoside + UDP. It carries out the reaction (4Z,15Z)-bilirubin IXalpha C8-beta-D-glucuronoside + UDP-alpha-D-glucuronate = (4Z,15Z)-bilirubin IXalpha C8,C12-beta-D-bisglucuronoside + UDP. It catalyses the reaction (4Z,15Z)-bilirubin IXalpha C12-beta-D-glucuronoside + UDP-alpha-D-glucuronate = (4Z,15Z)-bilirubin IXalpha C8,C12-beta-D-bisglucuronoside + UDP. The enzyme catalyses 8-iso-prostaglandin F2alpha + UDP-alpha-D-glucuronate = 8-iso-prostaglandin F2alpha-glucuronide + UDP + H(+). The catalysed reaction is (5Z,8Z,11Z,14Z)-eicosatetraenoate + UDP-alpha-D-glucuronate = O-[(5Z),(8Z),(11Z),(14Z)-eicosatetraenoyl]-beta-D-glucuronate + UDP. It carries out the reaction 15-hydroxy-(5Z,8Z,11Z,13E)-eicosatetraenoate + UDP-alpha-D-glucuronate = 15-O-(beta-D-glucuronosyl)-(5Z,8Z,11Z,14Z)-eicosatetraenoate + UDP + H(+). It catalyses the reaction 20-hydroxy-(5Z,8Z,11Z,14Z)-eicosatetraenoate + UDP-alpha-D-glucuronate = 20-O-(beta-D-glucuronosyl)-(5Z,8Z,11Z,14Z)-eicosatetraenoate + UDP + H(+). The enzyme catalyses prostaglandin B1 + UDP-alpha-D-glucuronate = 15-O-(beta-D-glucuronosyl)-prostaglandin B1 + UDP + H(+). The catalysed reaction is (E)-ferulate + UDP-alpha-D-glucuronate = (E)-4-O-(beta-D-glucuronosyl)-ferulate + UDP + H(+). It carries out the reaction (E)-ferulate + UDP-alpha-D-glucuronate = (E)-ferulic acid beta-D-glucuronate ester + UDP. Its function is as follows. UDP-glucuronosyltransferase (UGT) that catalyzes phase II biotransformation reactions in which lipophilic substrates are conjugated with glucuronic acid to increase the metabolite's water solubility, thereby facilitating excretion into either the urine or bile. Essential for the elimination and detoxification of drugs, xenobiotics and endogenous compounds. Catalyzes the glucuronidation of endogenous estrogen hormones such as estradiol, estrone and estriol. Involved in the glucuronidation of bilirubin, a degradation product occurring in the normal catabolic pathway that breaks down heme in vertebrates. Involved in the glucuronidation of arachidonic acid (AA) and AA-derived eicosanoids including 15-HETE, 20-HETE, PGB1 and F2-isoprostane (8-iso-PGF2alpha). Involved in the glucuronidation of the phytochemical ferulic acid at the phenolic or the carboxylic acid group. Also catalyzes the glucuronidation the isoflavones genistein, daidzein, glycitein, formononetin, biochanin A and prunetin, which are phytoestrogens with anticancer and cardiovascular properties. Involved in the glucuronidation of the AGTR1 angiotensin receptor antagonist losartan, a drug which can inhibit the effect of angiotensin II. Involved in the biotransformation of 7-ethyl-10-hydroxycamptothecin (SN-38), the pharmacologically active metabolite of the anticancer drug irinotecan. In terms of biological role, lacks UGT glucuronidation activity but acts as a negative regulator of isoform 1. This Homo sapiens (Human) protein is UDP-glucuronosyltransferase 1A1.